Consider the following 445-residue polypeptide: C-terminal-binding protein 2 (445 aa).

The residue at position 22 (arginine 22) is an Asymmetric dimethylarginine. NAD(+)-binding positions include serine 106, 186–191, aspartate 210, 243–249, 270–272, and aspartate 296; these read IGFGRT, CNLNEHN, and AAR. Arginine 272 is an active-site residue. Residue glutamate 301 is part of the active site. Histidine 321 (proton donor) is an active-site residue. 321–324 contributes to the NAD(+) binding site; sequence HTAW. Residues 414–445 form a disordered region; that stretch reads THNLPTVAHPSQAPSPNQPTKHGDNREHPNEQ. Serine 428 carries the post-translational modification Phosphoserine; by HIPK2. A compositionally biased stretch (basic and acidic residues) spans 434 to 445; the sequence is KHGDNREHPNEQ.

It belongs to the D-isomer specific 2-hydroxyacid dehydrogenase family. Interacts with HIPK2, ZNF217 and PNN. Interacts with the transcription factors BKLF, delta EF1/AREB6/ZEB, EVI-1 and Friend of GATA (FOG) via the consensus motif P-X-[DNS]-L-[STVA]. Can form a complex with BKLF on a CACCC-box oligonucleotide. Can form homodimers or heterodimers of CTBP1 and CTBP2. Interacts with NRIP1 and WIZ. Interacts with PRDM16; represses white adipose tissue (WAT)-specific genes expression. Interacts with MCRIP1. Post-translationally, phosphorylation by HIPK2 on Ser-428 induces proteasomal degradation. Isoform 2 is specifically localized in synaptic ribbon (at protein level).

It is found in the nucleus. Its subcellular location is the synapse. In terms of biological role, corepressor targeting diverse transcription regulators. Functions in brown adipose tissue (BAT) differentiation. Isoform 2 probably acts as a scaffold for specialized synapses. In Rattus norvegicus (Rat), this protein is C-terminal-binding protein 2 (Ctbp2).